Here is a 504-residue protein sequence, read N- to C-terminus: Fumitremorgin C monooxygenase (504 aa).

A helical membrane pass occupies residues 12–32 (LGVVGASLIVILGIILLFPLG). A heme-binding site is contributed by cysteine 442.

It belongs to the cytochrome P450 family. It depends on heme as a cofactor.

It is found in the membrane. The catalysed reaction is fumitremorgin C + 2 reduced [NADPH--hemoprotein reductase] + 2 O2 = 12alpha,13alpha-dihydroxyfumitremorgin C + 2 oxidized [NADPH--hemoprotein reductase] + 2 H2O + 2 H(+). It functions in the pathway mycotoxin biosynthesis. Cytochrome P450 monooxygenase; part of the gene cluster that mediates the biosynthesis of fumitremorgins, indole alkaloids that carry not only intriguing chemical structures, but also interesting biological and pharmacological activities. The biosynthesis of fumitremorgin-type alkaloids begins by condensation of the two amino acids L-tryptophan and L-proline to brevianamide F, catalyzed by the non-ribosomal peptide synthetase ftmA. Brevianamide F is then prenylated by the prenyltransferase ftmPT1/ftmB in the presence of dimethylallyl diphosphate, resulting in the formation of tryprostatin B. The three cytochrome P450 monooxygenases, ftmP450-1/ftmC, ftmP450-2/ftmE and ftmP450-3/FtmG, are responsible for the conversion of tryprostatin B to 6-hydroxytryprostatin B, tryprostatin A to fumitremorgin C and fumitremorgin C to 12,13-dihydroxyfumitremorgin C, respectively. The putative methyltransferase ftmMT/ftmD is expected for the conversion of 6-hydroxytryprostatin B to tryprostatin A. FtmPT2/FtmH catalyzes the prenylation of 12,13-dihydroxyfumitre-morgin C in the presence of dimethylallyl diphosphate, resulting in the formation of fumitremorgin B. Fumitremorgin B is further converted to verruculogen by ftmOx1/ftmF via the insertion of an endoperoxide bond between the two prenyl moieties. In some fungal species, verruculogen is further converted to fumitremorgin A, but the enzymes involved in this step have not been identified yet. This chain is Fumitremorgin C monooxygenase, found in Aspergillus fumigatus (Neosartorya fumigata).